Here is a 447-residue protein sequence, read N- to C-terminus: Na(+)-translocating NADH-quinone reductase subunit A (447 aa).

Belongs to the NqrA family. As to quaternary structure, composed of six subunits; NqrA, NqrB, NqrC, NqrD, NqrE and NqrF.

The enzyme catalyses a ubiquinone + n Na(+)(in) + NADH + H(+) = a ubiquinol + n Na(+)(out) + NAD(+). NQR complex catalyzes the reduction of ubiquinone-1 to ubiquinol by two successive reactions, coupled with the transport of Na(+) ions from the cytoplasm to the periplasm. NqrA to NqrE are probably involved in the second step, the conversion of ubisemiquinone to ubiquinol. This is Na(+)-translocating NADH-quinone reductase subunit A from Photorhabdus laumondii subsp. laumondii (strain DSM 15139 / CIP 105565 / TT01) (Photorhabdus luminescens subsp. laumondii).